The primary structure comprises 87 residues: Putative autophagy-related protein 8E (87 aa).

The segment covering Met1–Arg14 has biased composition (basic and acidic residues). The disordered stretch occupies residues Met1 to Leu30. The Phosphatidylethanolamine amidated glycine moiety is linked to residue Gly87.

The protein belongs to the ATG8 family. As to quaternary structure, interacts with ATG4. Post-translationally, the C-terminal Gly is amidated with phosphatidylethanolamine by an activating system similar to that for ubiquitin.

The protein resides in the cytoplasmic vesicle. It localises to the autophagosome membrane. It is found in the vacuole membrane. Its subcellular location is the cytoplasm. The protein localises to the cytoskeleton. In terms of biological role, ubiquitin-like modifier involved in autophagosomes formation. May mediate the delivery of the autophagosomes to the vacuole via the microtubule cytoskeleton. This Oryza sativa subsp. japonica (Rice) protein is Putative autophagy-related protein 8E (ATG8E).